A 426-amino-acid chain; its full sequence is Enolase (426 aa).

Gln-163 is a (2R)-2-phosphoglycerate binding site. Glu-205 serves as the catalytic Proton donor. 3 residues coordinate Mg(2+): Asp-242, Glu-285, and Asp-312. Residues Lys-337, Arg-366, Ser-367, and Lys-388 each coordinate (2R)-2-phosphoglycerate. Lys-337 (proton acceptor) is an active-site residue.

It belongs to the enolase family. Mg(2+) is required as a cofactor.

It localises to the cytoplasm. The protein localises to the secreted. The protein resides in the cell surface. It carries out the reaction (2R)-2-phosphoglycerate = phosphoenolpyruvate + H2O. It participates in carbohydrate degradation; glycolysis; pyruvate from D-glyceraldehyde 3-phosphate: step 4/5. Its function is as follows. Catalyzes the reversible conversion of 2-phosphoglycerate (2-PG) into phosphoenolpyruvate (PEP). It is essential for the degradation of carbohydrates via glycolysis. The chain is Enolase from Phenylobacterium zucineum (strain HLK1).